Reading from the N-terminus, the 130-residue chain is Mediator of RNA polymerase II transcription subunit 10 (130 aa).

It belongs to the Mediator complex subunit 10 family. Component of the Mediator complex.

The protein localises to the nucleus. Functionally, component of the Mediator complex, a coactivator involved in the regulated transcription of nearly all RNA polymerase II-dependent genes. Mediator functions as a bridge to convey information from gene-specific regulatory proteins to the basal RNA polymerase II transcription machinery. Mediator is recruited to promoters by direct interactions with regulatory proteins and serves as a scaffold for the assembly of a functional preinitiation complex with RNA polymerase II and the general transcription factors. This Aedes aegypti (Yellowfever mosquito) protein is Mediator of RNA polymerase II transcription subunit 10 (MED10).